Consider the following 160-residue polypeptide: Transcription elongation factor GreA (160 aa).

Residues 11-38 adopt a coiled-coil conformation; the sequence is YDRLMKELERLKSERPAIIQAIKEAREE.

This sequence belongs to the GreA/GreB family.

In terms of biological role, necessary for efficient RNA polymerase transcription elongation past template-encoded arresting sites. The arresting sites in DNA have the property of trapping a certain fraction of elongating RNA polymerases that pass through, resulting in locked ternary complexes. Cleavage of the nascent transcript by cleavage factors such as GreA or GreB allows the resumption of elongation from the new 3'terminus. GreA releases sequences of 2 to 3 nucleotides. In Nitratidesulfovibrio vulgaris (strain DSM 19637 / Miyazaki F) (Desulfovibrio vulgaris), this protein is Transcription elongation factor GreA.